Consider the following 336-residue polypeptide: Probable allantoicase (336 aa).

The protein belongs to the allantoicase family.

The catalysed reaction is allantoate + H2O = (S)-ureidoglycolate + urea. It functions in the pathway nitrogen metabolism; (S)-allantoin degradation; (S)-ureidoglycolate from allantoate (aminidohydrolase route): step 1/1. This chain is Probable allantoicase, found in Acinetobacter baumannii (strain AYE).